We begin with the raw amino-acid sequence, 69 residues long: Putative membrane protein insertion efficiency factor (69 aa).

The protein belongs to the UPF0161 family.

Its subcellular location is the cell inner membrane. Functionally, could be involved in insertion of integral membrane proteins into the membrane. The sequence is that of Putative membrane protein insertion efficiency factor from Magnetococcus marinus (strain ATCC BAA-1437 / JCM 17883 / MC-1).